The primary structure comprises 345 residues: Histone H3-like centromeric protein cpar-1 (345 aa).

The tract at residues 117–246 is disordered; sequence NHSNRKPLEE…SRVTKTHNRK (130 aa). Over residues 122 to 149 the composition is skewed to basic and acidic residues; the sequence is KPLEESRRREEPRDRVHESNIDITHRGD. Over residues 233 to 246 the composition is skewed to basic residues; sequence RSGKSRVTKTHNRK. The segment at 263 to 340 is H3-like; it reads STDMLIQKAP…TDIQLYRRLC (78 aa).

This sequence belongs to the histone H3 family. As to quaternary structure, forms a nucleosome-like histone octamer containing two molecules each of H2A, H2B, cpar-1 and H4 assembled in one cpar-1-H4 heterotetramer and two H2A-H2B heterodimers. Cleaved at the onset of meiotic anaphase I, likely by separase sep-1.

It is found in the nucleus. Its subcellular location is the chromosome. Histone H3-like variant which exclusively replaces conventional H3 in the nucleosome core of centromeric chromatin at the inner plate of the kinetochore. Required for recruitment and assembly of kinetochore proteins, mitotic progression and chromosome segregation. May serve as an epigenetic mark that propagates centromere identity through replication and cell division. Not required for chromosome segregation during meiosis. The protein is Histone H3-like centromeric protein cpar-1 of Caenorhabditis briggsae.